Here is a 547-residue protein sequence, read N- to C-terminus: Chaperonin GroEL (547 aa).

Residues 30 to 33 (TLGP), K51, 87 to 91 (DGTTT), G415, and D495 each bind ATP. Residues 526–547 (QDATPTASPDMGGMGGMGGGMM) are disordered. A compositionally biased stretch (gly residues) spans 537–547 (GGMGGMGGGMM).

The protein belongs to the chaperonin (HSP60) family. As to quaternary structure, forms a cylinder of 14 subunits composed of two heptameric rings stacked back-to-back. Interacts with the co-chaperonin GroES.

The protein resides in the cytoplasm. The catalysed reaction is ATP + H2O + a folded polypeptide = ADP + phosphate + an unfolded polypeptide.. Its function is as follows. Together with its co-chaperonin GroES, plays an essential role in assisting protein folding. The GroEL-GroES system forms a nano-cage that allows encapsulation of the non-native substrate proteins and provides a physical environment optimized to promote and accelerate protein folding. The polypeptide is Chaperonin GroEL (Vesicomyosocius okutanii subsp. Calyptogena okutanii (strain HA)).